Consider the following 270-residue polypeptide: Aliphatic sulfonates import ATP-binding protein SsuB 3 (270 aa).

Residues 17-238 (LAVRNLKKAF…VRGSHRLAAL (222 aa)) form the ABC transporter domain. 49–56 (GRSGCGKS) contacts ATP.

This sequence belongs to the ABC transporter superfamily. Aliphatic sulfonates importer (TC 3.A.1.17.2) family. The complex is composed of two ATP-binding proteins (SsuB), two transmembrane proteins (SsuC) and a solute-binding protein (SsuA).

It localises to the cell inner membrane. The catalysed reaction is ATP + H2O + aliphatic sulfonate-[sulfonate-binding protein]Side 1 = ADP + phosphate + aliphatic sulfonateSide 2 + [sulfonate-binding protein]Side 1.. Part of the ABC transporter complex SsuABC involved in aliphatic sulfonates import. Responsible for energy coupling to the transport system. The sequence is that of Aliphatic sulfonates import ATP-binding protein SsuB 3 from Pseudomonas savastanoi pv. phaseolicola (strain 1448A / Race 6) (Pseudomonas syringae pv. phaseolicola (strain 1448A / Race 6)).